A 626-amino-acid chain; its full sequence is Colicin-Ia (626 aa).

The interval 23-225 is translocation (T); sequence EIMAVDIYVN…TRLSELEKNG (203 aa). The span at 276-286 shows a compositional bias: polar residues; that stretch reads QQLTQQKNTPD. Residues 276–308 are disordered; the sequence is QQLTQQKNTPDGKTIVSPEKFPGRSSTNHSIVV. The segment at 282–385 is receptor-binding (R); sequence KNTPDGKTIV…LRQRLLDARN (104 aa). The tract at residues 450-626 is channel (C); the sequence is KDAINFTTEF…VEKANKFWGI (177 aa). Helical transmembrane passes span 580–594 and 597–612; these read ATALVALVFSILTGS and GIIGYGLLMAVTGALI.

This sequence belongs to the channel forming colicin family.

It is found in the cell membrane. Functionally, this colicin is a channel-forming colicin. This class of transmembrane toxins depolarize the cytoplasmic membrane, leading to dissipation of cellular energy. Colicins are polypeptide toxins produced by and active against E.coli and closely related bacteria. The sequence is that of Colicin-Ia (cia) from Escherichia coli.